The primary structure comprises 143 residues: Large ribosomal subunit protein uL11 (143 aa).

The protein belongs to the universal ribosomal protein uL11 family. Part of the ribosomal stalk of the 50S ribosomal subunit. Interacts with L10 and the large rRNA to form the base of the stalk. L10 forms an elongated spine to which L12 dimers bind in a sequential fashion forming a multimeric L10(L12)X complex. One or more lysine residues are methylated.

In terms of biological role, forms part of the ribosomal stalk which helps the ribosome interact with GTP-bound translation factors. The chain is Large ribosomal subunit protein uL11 from Bifidobacterium longum (strain DJO10A).